Reading from the N-terminus, the 42-residue chain is Photosystem I reaction center subunit IX (42 aa).

Residues 7-27 (YLSAAPVLSTLWLGALAGLLI) form a helical membrane-spanning segment.

It belongs to the PsaJ family.

Its subcellular location is the plastid membrane. May help in the organization of the PsaE and PsaF subunits. This is Photosystem I reaction center subunit IX from Cuscuta exaltata (Tall dodder).